The following is a 335-amino-acid chain: Ubiquinone biosynthesis protein COQ4, mitochondrial (335 aa).

Residues 1 to 10 (MLRLSLLRST) constitute a mitochondrion transit peptide. The Zn(2+) site is built by His-210, Asp-211, His-214, and Glu-226.

The protein belongs to the COQ4 family. As to quaternary structure, component of a multi-subunit COQ enzyme complex, composed of at least COQ3, COQ4, COQ5, COQ6, COQ7 and COQ9. Interacts with COQ3. Requires Zn(2+) as cofactor.

The protein resides in the mitochondrion inner membrane. The enzyme catalyses 4-hydroxy-3-methoxy-5-(all-trans-hexaprenyl)benzoate + H(+) = 2-methoxy-6-(all-trans-hexaprenyl)phenol + CO2. It functions in the pathway cofactor biosynthesis; ubiquinone biosynthesis. Lyase that catalyzes the C1-decarboxylation of 4-hydroxy-3-methoxy-5-(all-trans-hexaprenyl)benzoic acid into 2-methoxy-6-(all-trans-hexaprenyl)phenol during ubiquinone biosynthesis. In Saccharomyces cerevisiae (strain YJM789) (Baker's yeast), this protein is Ubiquinone biosynthesis protein COQ4, mitochondrial.